Consider the following 27-residue polypeptide: Potassium channel toxin kappa-KTx 2.2 (27 aa).

2 disulfide bridges follow: C3–C21 and C7–C17.

Belongs to the short scorpion toxin superfamily. Potassium channel inhibitor kappa-KTx family. Kappa-KTx 2 subfamily. As to expression, expressed by the venom gland.

The protein localises to the secreted. Its function is as follows. OmTx1 decreases the amplitude of the potassium current of the rat channels Kv1.1/KCNA1 by 17% and Kv1.2/KCNA2 by 12% as well as human Kv1.3/KCNA3 by 24%. In terms of biological role, omTx2 decreases the amplitude of the potassium current of the rat channels Kv1.1/KCNA1 by 8% and Kv1.2/KCNA2 by 10% as well as human Kv1.3/KCNA3 by 36%. Also alters glucose-induced insulin release from pancreatic islets. The chain is Potassium channel toxin kappa-KTx 2.2 from Opisthacanthus madagascariensis (Scorpion).